We begin with the raw amino-acid sequence, 480 residues long: UDP-N-acetylmuramate--L-alanine ligase (480 aa).

126 to 132 (GTHGKTT) is an ATP binding site.

The protein belongs to the MurCDEF family.

The protein localises to the cytoplasm. It catalyses the reaction UDP-N-acetyl-alpha-D-muramate + L-alanine + ATP = UDP-N-acetyl-alpha-D-muramoyl-L-alanine + ADP + phosphate + H(+). The protein operates within cell wall biogenesis; peptidoglycan biosynthesis. Cell wall formation. This chain is UDP-N-acetylmuramate--L-alanine ligase, found in Blochmanniella pennsylvanica (strain BPEN).